The chain runs to 402 residues: Ketol-acid reductoisomerase, mitochondrial (402 aa).

The N-terminal 26 residues, M1–T26, are a transit peptide targeting the mitochondrion. The 190-residue stretch at K63 to T252 folds into the KARI N-terminal Rossmann domain. Residues G90–G99, R114–S119, and S152–Q156 contribute to the NADP(+) site. Residue H177 is part of the active site. Residues T253 to N400 enclose the KARI C-terminal knotted domain. The Mg(2+) site is built by D261, E265, E297, and E301. S323 is a binding site for substrate.

Belongs to the ketol-acid reductoisomerase family. Requires Mg(2+) as cofactor.

The protein localises to the mitochondrion. The enzyme catalyses (2R)-2,3-dihydroxy-3-methylbutanoate + NADP(+) = (2S)-2-acetolactate + NADPH + H(+). It carries out the reaction (2R,3R)-2,3-dihydroxy-3-methylpentanoate + NADP(+) = (S)-2-ethyl-2-hydroxy-3-oxobutanoate + NADPH + H(+). It functions in the pathway amino-acid biosynthesis; L-isoleucine biosynthesis; L-isoleucine from 2-oxobutanoate: step 2/4. It participates in amino-acid biosynthesis; L-valine biosynthesis; L-valine from pyruvate: step 2/4. The chain is Ketol-acid reductoisomerase, mitochondrial (ilv-2) from Neurospora crassa (strain ATCC 24698 / 74-OR23-1A / CBS 708.71 / DSM 1257 / FGSC 987).